The sequence spans 176 residues: Lipoprotein signal peptidase (176 aa).

Helical transmembrane passes span 10 to 30 (LFQF…AIVL), 48 to 68 (VPVL…AFSF), 78 to 98 (YFFT…LLRM), and 102 to 122 (MVVL…NLID). Residues aspartate 131 and aspartate 149 contribute to the active site. Residues 141 to 161 (HFPAFNIADSAITLGTILLLI) traverse the membrane as a helical segment.

Belongs to the peptidase A8 family.

The protein localises to the cell inner membrane. It catalyses the reaction Release of signal peptides from bacterial membrane prolipoproteins. Hydrolyzes -Xaa-Yaa-Zaa-|-(S,diacylglyceryl)Cys-, in which Xaa is hydrophobic (preferably Leu), and Yaa (Ala or Ser) and Zaa (Gly or Ala) have small, neutral side chains.. It participates in protein modification; lipoprotein biosynthesis (signal peptide cleavage). This protein specifically catalyzes the removal of signal peptides from prolipoproteins. This chain is Lipoprotein signal peptidase, found in Acinetobacter baumannii (strain SDF).